An 809-amino-acid chain; its full sequence is Ecotropic viral integration site 5 protein (809 aa).

An interaction with alpha-tubulin, gamma-tubulin, BIRC5 and FBXO5 region spans residues 1–483; that stretch reads MVTTKMTAAF…EAESQCALKE (483 aa). Disordered regions lie at residues 49-80 and 99-123; these read VASP…KLSP and DSKS…SSSA. Residues 51–78 are compositionally biased toward low complexity; the sequence is SPSASLHTTSSSTTLSTPTQSPSSPSKL. 2 positions are modified to phosphoserine: Ser102 and Ser113. The segment covering 103 to 123 has biased composition (low complexity); that stretch reads LRSVNGSRRNSGSSLVSSSSA. The tract at residues 128–693 is dimerization; sequence SHLEEDSWIL…LNRSDSNQYI (566 aa). In terms of domain architecture, Rab-GAP TBC spans 163-348; it reads GIPHHFRAIV…RIFDIFMSEG (186 aa). The targeting to the centrosomes stretch occupies residues 377 to 809; it reads QHFQKVIPHQ…PQRESYSTTV (433 aa). Residues 406–717 are a coiled coil; that stretch reads KKMKKLEKEY…RCLKGQRDFS (312 aa). Residues 487-809 form an interaction with AURKB and INCENP region; sequence KVLDIEKKNN…PQRESYSTTV (323 aa). 4 positions are modified to phosphoserine: Ser497, Ser689, Ser776, and Ser778. The segment at 760–809 is disordered; sequence HRKSGPMSLNPALADGSESEAEDGMLGPQESDPEAPQKQPPQRESYSTTV. The span at 799 to 809 shows a compositional bias: polar residues; that stretch reads PPQRESYSTTV.

In terms of assembly, dimeric and monomeric. Interacts with alpha- and gamma-tubulin. Interacts with FBXO5. Interacts with the chromosome passenger complex (CPC) which is at least composed of AURKB/aurora-B, BIRC5/survivin, CDCA8/borealin and INCENP. In terms of processing, probably phosphorylated by PLK1; may be required for degradation during mitosis. Post-translationally, ubiquitinated. Degradation during prophase is ubiquitin-dependent. In terms of tissue distribution, widely expressed.

Its subcellular location is the nucleus. The protein localises to the cytoplasm. The protein resides in the cytoskeleton. It localises to the microtubule organizing center. It is found in the centrosome. Its subcellular location is the spindle. Functions as a regulator of cell cycle progression by stabilizing the FBXO5 protein and promoting cyclin-A accumulation during interphase. May play a role in cytokinesis. The protein is Ecotropic viral integration site 5 protein (Evi5) of Mus musculus (Mouse).